Here is a 783-residue protein sequence, read N- to C-terminus: MEGAMAVRVTAAHTAEARAEAGREAGEGGVAAAAALSSGGFLGLPAPFSEEDEDDVHRCGRCQVEFTALEDFVQHKIQKTCHRAPQEALPTTPAATALLDQEVVPTAAEGGPDEPITVAHIVVEATSLAEDISHAPDLVGSGHIKEVIVAAEAEPGDVEMAEAPGSPNHQELGLLGEGEQAHVKLLVNKEGRYVCMLCHKTFKTGSILKAHMVTHSSRKDHECKLCGASFRTKGSLIRHHRRHTDERPYKCAKCGKSFRESGALTRHLKSLTPCTEKIRFSISKDTAVGKEEVPAGSSASTVGTVTSSVAGDPMETSPVIHLVTDAKGTVIHEVHVQMQELPLGMKALTPESPDSEELPCSSENSRENLLHQAMQNSGIVLERVAGEESALEPAPPSGSSPQCLGDGSPELPLLKVEQIETQVASEAATVPRTHPCPQCSETFPTAATLEAHKRGHIAPRPFTCTQCGKAFPKAYLLKKHQEVHVHERRFRCGDCGKLYKTIAHVRGHRRVHSDERPFPCPQCGKRYKTKNAQQVHFRTHLEEKPHVCQFCSRGFREKGSLVRHVRHHTGEKPFKCYKCGRGFAEHGTLNRHLRTKGGCLLEVEELLVSEESPSAAATVLAEDPHTVLVEFSSVVADTQEYIIEATADDTETSEATEIIEGTQTEVDSHIMKVVQQIVHQAGAGHQIIVQNVTMDQETALGSEATAADTITIATPESLTEQVAMTLASAISEGTVLTARAGPNSTEQATVTMVSSEDIEILEHGGELVIASPEGQLEVQTVIV.

The tract at residues 40 to 84 (GFLGLPAPFSEEDEDDVHRCGRCQVEFTALEDFVQHKIQKTCHRA) is required for ubiquitin ligase activity. Serine 49 is subject to Phosphoserine. The segment at 185–264 (LLVNKEGRYV…GKSFRESGAL (80 aa)) is mediates dimerization, DNA-binding, transcription repression of CCNA2 and interaction with HMGA2. 2 C2H2-type zinc fingers span residues 193–215 (YVCMLCHKTFKTGSILKAHMVTH) and 221–243 (HECKLCGASFRTKGSLIRHHRRH). The C2H2-type 3; degenerate zinc-finger motif lies at 249–273 (YKCAKCGKSFRESGALTRHLKSLTP). A mediates interaction with CDKN2A region spans residues 368–565 (NLLHQAMQNS…REKGSLVRHV (198 aa)). The interval 386–407 (GEESALEPAPPSGSSPQCLGDG) is disordered. 5 C2H2-type zinc fingers span residues 434–456 (HPCPQCSETFPTAATLEAHKRGH), 462–484 (FTCTQCGKAFPKAYLLKKHQEVH), 490–512 (FRCGDCGKLYKTIAHVRGHRRVH), 518–540 (FPCPQCGKRYKTKNAQQVHFRTH), and 546–568 (HVCQFCSRGFREKGSLVRHVRHH). The segment at 434 to 598 (HPCPQCSETF…LNRHLRTKGG (165 aa)) is interaction with BMI1. A mediates interaction with TP53 region spans residues 520 to 579 (CPQCGKRYKTKNAQQVHFRTHLEEKPHVCQFCSRGFREKGSLVRHVRHHTGEKPFKCYKC). A C2H2-type 9; degenerate zinc finger spans residues 574 to 596 (FKCYKCGRGFAEHGTLNRHLRTK). The segment at 574-596 (FKCYKCGRGFAEHGTLNRHLRTK) is mediates interaction with RASSF1.

As to quaternary structure, homodimer; binds DNA as a dimer. Forms a complex with CDKN2A and TP53. Interacts with HDAC1, HMGA2 and RASSF1. Interactions with TP53, RB1, ANP32A and probably BMI1 and FHL2 regulate E4F1 activity. In terms of processing, phosphorylated; phosphorylation is cell cycle-dependent and regulates DNA-binding activity and function. Post-translationally, may be sumoylated by UBE2I upon interaction with CDKN2A. Ubiquitously expressed.

It is found in the nucleus. It localises to the nucleoplasm. Its subcellular location is the cytoplasm. The enzyme catalyses S-ubiquitinyl-[E2 ubiquitin-conjugating enzyme]-L-cysteine + [acceptor protein]-L-lysine = [E2 ubiquitin-conjugating enzyme]-L-cysteine + N(6)-ubiquitinyl-[acceptor protein]-L-lysine.. It functions in the pathway protein modification; protein ubiquitination. Functionally, may function as a transcriptional repressor. May also function as a ubiquitin ligase mediating ubiquitination of chromatin-associated TP53. Functions in cell survival and proliferation through control of the cell cycle. Functions in the p53 and pRB tumor suppressor pathways and regulates the cyclin CCNA2 transcription. The chain is Transcription factor E4F1 (E4f1) from Mus musculus (Mouse).